Consider the following 101-residue polypeptide: Phosphoribosyl-AMP cyclohydrolase (101 aa).

Residue Asp-71 coordinates Mg(2+). Cys-72 serves as a coordination point for Zn(2+). Residues Asp-73 and Asp-75 each contribute to the Mg(2+) site. Positions 88 and 95 each coordinate Zn(2+).

The protein belongs to the PRA-CH family. As to quaternary structure, homodimer. It depends on Mg(2+) as a cofactor. The cofactor is Zn(2+).

Its subcellular location is the cytoplasm. The enzyme catalyses 1-(5-phospho-beta-D-ribosyl)-5'-AMP + H2O = 1-(5-phospho-beta-D-ribosyl)-5-[(5-phospho-beta-D-ribosylamino)methylideneamino]imidazole-4-carboxamide. Its pathway is amino-acid biosynthesis; L-histidine biosynthesis; L-histidine from 5-phospho-alpha-D-ribose 1-diphosphate: step 3/9. Catalyzes the hydrolysis of the adenine ring of phosphoribosyl-AMP. The sequence is that of Phosphoribosyl-AMP cyclohydrolase from Bacillus cereus (strain AH187).